Reading from the N-terminus, the 240-residue chain is Large ribosomal subunit protein uL3 (240 aa).

2 disordered regions span residues 139 to 164 (VSHR…KMPG) and 215 to 240 (DAPK…QEGV). Residue Gln-151 is modified to N5-methylglutamine. A compositionally biased stretch (low complexity) spans 225-240 (ADGGEQAAPAAEQEGV).

The protein belongs to the universal ribosomal protein uL3 family. In terms of assembly, part of the 50S ribosomal subunit. Forms a cluster with proteins L14 and L19. In terms of processing, methylated by PrmB.

One of the primary rRNA binding proteins, it binds directly near the 3'-end of the 23S rRNA, where it nucleates assembly of the 50S subunit. This chain is Large ribosomal subunit protein uL3, found in Rhodopseudomonas palustris (strain BisA53).